The primary structure comprises 160 residues: Transcriptional repressor NrdR (160 aa).

Positions 1–11 are enriched in polar residues; sequence MRCPNCNSLDT. Residues 1-20 are disordered; sequence MRCPNCNSLDTQVKDSRPTE. A zinc finger spans residues 3 to 34; it reads CPNCNSLDTQVKDSRPTEDSSVIRRRRVCIAC. Residues 49–139 enclose the ATP-cone domain; the sequence is LTVIKRNGRR…VYRNFREAKD (91 aa).

This sequence belongs to the NrdR family. Zn(2+) is required as a cofactor.

Its function is as follows. Negatively regulates transcription of bacterial ribonucleotide reductase nrd genes and operons by binding to NrdR-boxes. This chain is Transcriptional repressor NrdR, found in Rhodopseudomonas palustris (strain BisB5).